Reading from the N-terminus, the 220-residue chain is MLVIWLLLLALLPEPRVPAATASPRAPRDAGGRGGVYEHLGGAPRRRKLYCATKYHLQIHPGGKINGTLEKNSVFSILEITAVDVGIVAIKGLFSGRYLAMNKRGRLYASENYNTECEFVERIHELGYNTYASRLYRTVPSGASTKRKASAERLWYVSVNGKGRPRRGFKTRRTQKSSLFLPRVLDSKDHEMVRLFHTNVRYRESLLKPPSKNQRRRRGR.

Positions 1-19 (MLVIWLLLLALLPEPRVPA) are cleaved as a signal peptide. Positions 19-40 (AATASPRAPRDAGGRGGVYEHL) are disordered. Asparagine 66 is a glycosylation site (N-linked (GlcNAc...) asparagine).

Belongs to the heparin-binding growth factors family.

The protein resides in the secreted. Its function is as follows. Plays an important role in the regulation of embryonic development, cell proliferation, and cell differentiation. The chain is Fibroblast growth factor 3 (FGF3) from Gallus gallus (Chicken).